We begin with the raw amino-acid sequence, 76 residues long: Small ribosomal subunit protein uS17 (76 aa).

This sequence belongs to the universal ribosomal protein uS17 family. As to quaternary structure, part of the 30S ribosomal subunit.

Functionally, one of the primary rRNA binding proteins, it binds specifically to the 5'-end of 16S ribosomal RNA. The protein is Small ribosomal subunit protein uS17 of Ruegeria sp. (strain TM1040) (Silicibacter sp.).